The primary structure comprises 473 residues: ATP synthase subunit beta (473 aa).

158–165 (GGAGVGKT) serves as a coordination point for ATP.

This sequence belongs to the ATPase alpha/beta chains family. As to quaternary structure, F-type ATPases have 2 components, CF(1) - the catalytic core - and CF(0) - the membrane proton channel. CF(1) has five subunits: alpha(3), beta(3), gamma(1), delta(1), epsilon(1). CF(0) has three main subunits: a(1), b(2) and c(9-12). The alpha and beta chains form an alternating ring which encloses part of the gamma chain. CF(1) is attached to CF(0) by a central stalk formed by the gamma and epsilon chains, while a peripheral stalk is formed by the delta and b chains. The F(1)F(0) complex interacts with SpoIIIJ and YqjG; YqgA is found in the same complex.

The protein resides in the cell membrane. It is found in the membrane raft. It catalyses the reaction ATP + H2O + 4 H(+)(in) = ADP + phosphate + 5 H(+)(out). Functionally, produces ATP from ADP in the presence of a proton gradient across the membrane. The catalytic sites are hosted primarily by the beta subunits. This chain is ATP synthase subunit beta, found in Bacillus subtilis (strain 168).